A 197-amino-acid chain; its full sequence is Thymidylate kinase (197 aa).

7 to 14 (GIDGSGKS) is a binding site for ATP.

This sequence belongs to the thymidylate kinase family.

It catalyses the reaction dTMP + ATP = dTDP + ADP. Its function is as follows. Phosphorylation of dTMP to form dTDP in both de novo and salvage pathways of dTTP synthesis. The polypeptide is Thymidylate kinase (Thermotoga petrophila (strain ATCC BAA-488 / DSM 13995 / JCM 10881 / RKU-1)).